Reading from the N-terminus, the 393-residue chain is GDP-4-keto-6-deoxy-D-mannose 3-dehydratase (393 aa).

30 to 33 lines the GDP-4-dehydro-alpha-D-rhamnose pocket; sequence NMFT. The chain crosses the membrane as a helical span at residues 53–73; the sequence is YSVMVSSGSTANLLMIAALFF. Pyridoxal 5'-phosphate-binding positions include 60–61, tryptophan 92, glutamate 166, and serine 187; that span reads GS. Histidine 192 acts as the Proton donor/acceptor in catalysis. Position 219 (histidine 219) interacts with L-glutamate. Arginine 223 provides a ligand contact to GDP-4-dehydro-alpha-D-rhamnose. Pyridoxal 5'-phosphate is bound at residue asparagine 252. Arginine 254 lines the L-glutamate pocket. Glutamate 333 lines the GDP-4-dehydro-alpha-D-rhamnose pocket.

This sequence belongs to the DegT/DnrJ/EryC1 family. As to quaternary structure, homodimer. Requires pyridoxal 5'-phosphate as cofactor.

The protein localises to the cell membrane. It catalyses the reaction GDP-4-dehydro-alpha-D-rhamnose + L-glutamate = GDP-4-dehydro-3,6-dideoxy-alpha-D-mannose + 2-oxoglutarate + NH4(+). The protein operates within nucleotide-sugar metabolism; GDP-L-colitose biosynthesis. Its function is as follows. Involved in the biosynthesis of L-colitose, a 3,6-dideoxyhexose present in the O-antigen region of lipopolysaccharides (LPS), where it serves as an antigenic determinant and is vital for bacterial defense and survival. Catalyzes the removal of the C3'-hydroxyl group from GDP-4-keto-6-deoxy-D-mannose via a combined transamination-deoxygenation reaction. The catalysis is initiated by a transamination step in which pyridoxal 5'-phosphate (PLP) is converted to pyridoxamine 5'-phosphate (PMP) in the presence of L-glutamate. This coenzyme then forms a Schiff base with GDP-4-keto-6-deoxy-D-mannose and the resulting adduct undergoes a PMP-mediated beta-dehydration reaction to give a sugar enamine intermediate, which after tautomerization and hydrolysis to release ammonia yields GDP-4-keto-3,6-dideoxy-D-mannose as a product. In Yersinia pseudotuberculosis, this protein is GDP-4-keto-6-deoxy-D-mannose 3-dehydratase.